The sequence spans 91 residues: PqqA binding protein (91 aa).

This sequence belongs to the PqqD family. As to quaternary structure, monomer. Interacts with PqqE.

The protein operates within cofactor biosynthesis; pyrroloquinoline quinone biosynthesis. Functions as a PqqA binding protein and presents PqqA to PqqE, in the pyrroloquinoline quinone (PQQ) biosynthetic pathway. This chain is PqqA binding protein, found in Pseudomonas fluorescens (strain Pf0-1).